Reading from the N-terminus, the 388-residue chain is Na(+)/H(+) antiporter NhaA (388 aa).

11 helical membrane-spanning segments follow: residues 14–34 (GGII…MGAT), 59–79 (MLLW…GLEV), 95–115 (AFPV…YLAF), 125–145 (GWAI…ALLG), 154–174 (IFLM…IALF), 179–199 (LSIV…LLNL), 219–239 (VLKS…FIPL), 254–274 (VLHP…NAGV), 292–312 (IIAG…WLAL), 328–348 (IMAV…IASL), and 360–380 (WAKL…YSWL).

This sequence belongs to the NhaA Na(+)/H(+) (TC 2.A.33) antiporter family.

It is found in the cell inner membrane. The enzyme catalyses Na(+)(in) + 2 H(+)(out) = Na(+)(out) + 2 H(+)(in). Na(+)/H(+) antiporter that extrudes sodium in exchange for external protons. The polypeptide is Na(+)/H(+) antiporter NhaA (Salmonella paratyphi A (strain ATCC 9150 / SARB42)).